Here is a 267-residue protein sequence, read N- to C-terminus: DNA damage-regulated autophagy modulator protein 2 (267 aa).

A run of 6 helical transmembrane segments spans residues 8-28 (LSFL…FSYI), 53-73 (RCLF…TMYV), 87-107 (LIIK…LGLS), 118-138 (FIVH…YMFV), 160-180 (LLLV…SSIL), and 203-223 (VLHL…FGFF).

The protein belongs to the DRAM/TMEM150 family. In terms of tissue distribution, expressed in the retina.

Its subcellular location is the lysosome membrane. The protein resides in the photoreceptor inner segment. It localises to the apical cell membrane. Functionally, plays a role in the initiation of autophagy. In the retina, might be involved in the process of photoreceptor cells renewal and recycling to preserve visual function. Induces apoptotic cell death when coexpressed with DRAM1. This chain is DNA damage-regulated autophagy modulator protein 2 (Dram2), found in Mus musculus (Mouse).